Here is a 356-residue protein sequence, read N- to C-terminus: Tyrosine recombinase XerS (356 aa).

The Core-binding (CB) domain occupies 16–121 (IMPWYVLDYY…ALSSLYKYLT (106 aa)). The Tyr recombinase domain occupies 169–354 (AFLDYVDKEY…VNDEQKNALD (186 aa)). Residues Arg210, Lys234, His306, Arg309, and His332 contribute to the active site. The O-(3'-phospho-DNA)-tyrosine intermediate role is filled by Tyr341.

This sequence belongs to the 'phage' integrase family. XerS subfamily.

It localises to the cytoplasm. Its activity is regulated as follows. FtsK is required for recombination. Its function is as follows. Site-specific tyrosine recombinase, which acts by catalyzing the cutting and rejoining of the recombining DNA molecules. Essential to convert dimers of the bacterial chromosome into monomers to permit their segregation at cell division. This Streptococcus pyogenes serotype M2 (strain MGAS10270) protein is Tyrosine recombinase XerS.